A 345-amino-acid chain; its full sequence is Prenyltransferase ltmC (345 aa).

Residue His-112 coordinates substrate. Mg(2+) is bound by residues Asp-119 and Asp-123. Arg-128 is a substrate binding site. The N-linked (GlcNAc...) asparagine glycan is linked to Asn-130. The substrate site is built by Lys-212, Thr-213, Gln-243, Asn-250, and Lys-260.

Belongs to the FPP/GGPP synthase family. It depends on Mg(2+) as a cofactor.

It functions in the pathway secondary metabolite biosynthesis. Functionally, prenyltransferase; part of the gene cluster that mediates the biosynthesis of lolitrems, indole-diterpene mycotoxins that are potent tremorgens in mammals, and are synthesized by clavicipitaceous fungal endophytes in association with their grass hosts. The geranylgeranyl diphosphate (GGPP) synthase ltmG is proposed to catalyze the first step in lolitrem biosynthesis. LtmG catalyzes a series of iterative condensations of isopentenyl diphosphate (IPP) with dimethylallyl diphosphate (DMAPP), geranyl diphosphate (GPP), and farnesyl diphosphate (FPP), to form GGPP. GGPP then condenses with indole-3-glycerol phosphate to form 3-geranylgeranylindole, an acyclic intermediate, to be incorporated into paxilline. Either ltmG or ltmC could be responsible for this step, as both are putative prenyl transferases. The FAD-dependent monooxygenase ltmM then catalyzes the epoxidation of the two terminal alkenes of the geranylgeranyl moiety, which is subsequently cyclized by ltmB, to paspaline. The cytochrome P450 monooxygenases ltmQ and ltmP can sequentially oxidize paspaline to terpendole E and terpendole F. Alternatively, ltmP converts paspaline to an intermediate which is oxidized by ltmQ to terpendole F. LtmF, ltmK, ltmE and ltmJ appear to be unique to the epichloe endophytes. The prenyltransferase ltmF is involved in the 27-hydroxyl-O-prenylation. The cytochrome P450 monooxygenase ltmK is required for the oxidative acetal ring formation. The multi-functional prenyltransferase ltmE is required for C20- and C21-prenylations of the indole ring of paspalanes and acts together with the cytochrome P450 monooxygenase ltmJ to yield lolitremanes by multiple oxidations and ring closures. The stereoisomer pairs of lolitriol and lolitrem N or lolitrem B and lolitrem F may be attributed to variations in the way in which ring closure can occur under the action of ltmJ. While the major product of this pathway is lolitrem B, the prenyl transferases and cytochrome P450 monooxygenases identified in this pathway have a remarkable versatility in their regio- and stereo-specificities to generate a diverse range of metabolites that are products of a metabolic grid rather than a linear pathway. In Epichloe festucae var. lolii (Neotyphodium lolii), this protein is Prenyltransferase ltmC.